We begin with the raw amino-acid sequence, 621 residues long: MAU2 chromatid cohesion factor homolog (621 aa).

TPR repeat units lie at residues 96 to 129 (FDTA…SQNN), 451 to 484 (GGFY…ANAE), and 491 to 524 (SCSL…ASKI).

This sequence belongs to the SCC4/mau-2 family. In terms of assembly, interacts with Nipped-B to form the cohesin loading complex.

It is found in the nucleus. Its subcellular location is the nucleoplasm. Required for association of the cohesin complex with chromatin during interphase. Plays a role in sister chromatid cohesion and normal progression through prometaphase. The sequence is that of MAU2 chromatid cohesion factor homolog from Drosophila virilis (Fruit fly).